The primary structure comprises 1115 residues: Integrin alpha-PS3 (1115 aa).

The first 24 residues, 1–24 (MNAESTMFPHIFLALLALISHIEA), serve as a signal peptide directing secretion. The Extracellular portion of the chain corresponds to 25-1054 (FNFMPRPSRV…PNIISKHQET (1030 aa)). FG-GAP repeat units follow at residues 39–99 (KHLK…VCSP), 113–174 (SEYT…STPQ), 193–246 (DNGN…VDNP), 278–335 (IPTP…GKSI), 336–397 (HKYH…FNFE), 398–453 (RQIL…GLRD), and 460–522 (DAPS…SESR). 3 N-linked (GlcNAc...) asparagine glycosylation sites follow: asparagine 46, asparagine 82, and asparagine 166. Asparagine 438 carries an N-linked (GlcNAc...) asparagine glycan. Asparagine 696, asparagine 845, asparagine 868, and asparagine 964 each carry an N-linked (GlcNAc...) asparagine glycan. Residues 1055–1075 (GLPIWIIIVSVIGGLLLLSAI) form a helical membrane-spanning segment. Topologically, residues 1076–1115 (SYLLYKFGFFNRTKKDELDRLVQQNPVEPEAENLNSGGNN) are cytoplasmic.

The protein belongs to the integrin alpha chain family. In terms of assembly, heterodimer of an alpha and a beta subunit. The alpha subunit is composed of a heavy and a light chain linked by a disulfide bond. Interacts with mys/beta-PS and Itgbn. In terms of tissue distribution, expressed in embryonic and larval hemocytes (at protein level). Expressed in tissues undergoing invagination, tissue movement and morphogenesis such as salivary gland, trachea, midgut endoderm, dorsal vessel, midline of the ventral nerve cord, amnioserosa and the amnioproctodeal invagination. Expressed in the mushroom body neuropil, brain areas that contain mushroom body processes in synaptic contact with other neurons. In egg chambers, expressed in border cells, in stretch cells and in dorsal appendage primordia.

The protein localises to the apical cell membrane. Its subcellular location is the lateral cell membrane. It localises to the cytoplasm. Its function is as follows. Integrin alpha-PS3/beta-PS is a receptor for laminin. Also binds to wb. Important during embryogenesis for the development of the trachea, dorsal vessel and salivary gland, as well as for dorsal closure. Required for short-term memory processes. Minor involvement in the establishment of the oocyte anterior-posterior length. Plays a role in timely border cell migration during oogenesis, probably mediated by JNK signaling. Integrin alpha-PS3/Itgbn is required for effective phagocytosis of apoptotic cells during embryonic development and for the phagocytic elimination of S.aureus by mediating the binding of S.aureus peptidoglycan to larval hemocytes, which probably activates a signaling pathway involving Rac1 and Rac2. Integrin alpha-PS3/Itgbn also regulates Fak activity during neuromuscular junction (NMJ) growth and is required for its activation in presynapsis of NMJs. Seems to be dispensable for major morphogenetic processes. This is Integrin alpha-PS3 (scb) from Drosophila melanogaster (Fruit fly).